The chain runs to 421 residues: MDKLIITGGVRLDGEIRISGAKNSALPILAATLLGDEPVTICNLPHLHDITTMIELFGRMGVEPVIDEKLSVEVDARSIKTLVAPYELVKTMRASILVLGPMVARFGEAEVALPGGCAIGSRPVDLHIRGLEAMGAQIDVEGGYIKAKAPEGGLRGAHFFFDVVSVTGTENIMMAATLAKGRSVLENAAREPEVVDLANCLIAMGAKIQGAGTDTIIIDGVERLHGARFNVMPDRIETGTYLVAAAVTGGRVKVKDADPSTLEAVLAKLQEAGAEITTGPDWIELDMKGKRPKAVNLRTAPYPAFPTDMQAQFIALNAVAEGTGTVIETVFENRFMHVYEMLRMGANILVEGNTAIVTGVEKLKGAPVMATDLRASASLVLAALMAEGDTLIDRIYHIDRGYECIEEKLQLLGAKIRRVPG.

Position 22–23 (22–23) interacts with phosphoenolpyruvate; sequence KN. A UDP-N-acetyl-alpha-D-glucosamine-binding site is contributed by arginine 93. The Proton donor role is filled by cysteine 117. Cysteine 117 carries the 2-(S-cysteinyl)pyruvic acid O-phosphothioketal modification. UDP-N-acetyl-alpha-D-glucosamine contacts are provided by residues 122 to 126, aspartate 308, and valine 330; that span reads RPVDL.

Belongs to the EPSP synthase family. MurA subfamily.

It localises to the cytoplasm. The catalysed reaction is phosphoenolpyruvate + UDP-N-acetyl-alpha-D-glucosamine = UDP-N-acetyl-3-O-(1-carboxyvinyl)-alpha-D-glucosamine + phosphate. Its pathway is cell wall biogenesis; peptidoglycan biosynthesis. In terms of biological role, cell wall formation. Adds enolpyruvyl to UDP-N-acetylglucosamine. This chain is UDP-N-acetylglucosamine 1-carboxyvinyltransferase, found in Ectopseudomonas mendocina (strain ymp) (Pseudomonas mendocina).